Here is a 392-residue protein sequence, read N- to C-terminus: MSHNPDAIAPHGGQLVNRIATPEQREEFLSKADFLPRVQLDDRAVSDVEMIAIGAFSPLTGFMSQEDYDRTVTEMRLANGLVWSIPITLSVTEEVASPLQEGGLIRLDNSRGEFIAVLQLTQKYNYDKTREAINVYRTDDVKHPGVQVLYSQGTVHLAGDIWLLQREPHPQFPTYQIDPSASRQLFKDKGWKTIVGFQTRNPIHRAHEYIQKCALEIVDGLFLHPLVGATKEDDIAADVRMRCYEILLEHYYPLDRVTLAINPAAMRYAGPREAIFHALVRKNYGCTHFIVGRDHAGVGDYYGTYDAQYIFDEFAPGELGIVPMKFEHAFYCTRTKQMATSKTSPSRPEERIHLSGTKVREMLRRGELPPPEFSRPEVAAELARAMRIEVPV.

The protein belongs to the sulfate adenylyltransferase family.

The enzyme catalyses sulfate + ATP + H(+) = adenosine 5'-phosphosulfate + diphosphate. Its pathway is sulfur metabolism; hydrogen sulfide biosynthesis; sulfite from sulfate: step 1/3. The protein is Sulfate adenylyltransferase of Nostoc punctiforme (strain ATCC 29133 / PCC 73102).